Consider the following 461-residue polypeptide: Isthmin-1 (461 aa).

The signal sequence occupies residues 1 to 26 (MVRLAAELLLLLGLLLLTLHITVLRS). An N-linked (GlcNAc...) asparagine glycan is attached at asparagine 33. Positions 40–58 (QDSRVAENNVNADSSSSVQ) are enriched in polar residues. 3 disordered regions span residues 40–62 (QDSR…LGPG), 73–92 (ASQP…RDGP), and 128–188 (EGSE…NFLK). Positions 131-141 (EPEKGMRKENK) are enriched in basic and acidic residues. Positions 156 to 165 (SSSSSSSSVS) are enriched in low complexity. The 45-residue stretch at 215 to 259 (DGEGDWSAWSPCSVSCGNGNQKRTRSCGYACTATESRTCDMPSCP) folds into the TSP type-1 domain. 3 cysteine pairs are disulfide-bonded: cysteine 226-cysteine 253, cysteine 230-cysteine 258, and cysteine 241-cysteine 245. Residue asparagine 282 is glycosylated (N-linked (GlcNAc...) asparagine). Residues 286 to 449 (LFGVDTDSCE…QKCAENPQDE (164 aa)) form the AMOP domain.

The protein belongs to the isthmin family.

The protein resides in the secreted. Its function is as follows. May specifically influence certain angiogenesis process. This chain is Isthmin-1 (ism1), found in Danio rerio (Zebrafish).